The primary structure comprises 51 residues: Large ribosomal subunit protein eL39 (51 aa).

This sequence belongs to the eukaryotic ribosomal protein eL39 family.

The sequence is that of Large ribosomal subunit protein eL39 from Saccharolobus islandicus (strain L.S.2.15 / Lassen #1) (Sulfolobus islandicus).